Reading from the N-terminus, the 196-residue chain is FMN-dependent NADH:quinone oxidoreductase (196 aa).

FMN is bound by residues S10, 16-18 (SQS), 93-96 (MYNF), and 137-140 (TRGG).

The protein belongs to the azoreductase type 1 family. Homodimer. Requires FMN as cofactor.

It catalyses the reaction 2 a quinone + NADH + H(+) = 2 a 1,4-benzosemiquinone + NAD(+). It carries out the reaction N,N-dimethyl-1,4-phenylenediamine + anthranilate + 2 NAD(+) = 2-(4-dimethylaminophenyl)diazenylbenzoate + 2 NADH + 2 H(+). In terms of biological role, quinone reductase that provides resistance to thiol-specific stress caused by electrophilic quinones. Its function is as follows. Also exhibits azoreductase activity. Catalyzes the reductive cleavage of the azo bond in aromatic azo compounds to the corresponding amines. The sequence is that of FMN-dependent NADH:quinone oxidoreductase from Shewanella amazonensis (strain ATCC BAA-1098 / SB2B).